Reading from the N-terminus, the 176-residue chain is Lipoprotein signal peptidase (176 aa).

Helical transmembrane passes span 11–31, 38–58, 76–96, and 101–121; these read AFVA…LDQL, ATMQ…VLVF, WFFT…MHQH, and LLPA…VDRL. Active-site residues include Asp-128 and Asp-146. Residues 139-159 form a helical membrane-spanning segment; sequence WPAFNLADSAITLGVGLMLWA.

Belongs to the peptidase A8 family.

It localises to the cell inner membrane. It carries out the reaction Release of signal peptides from bacterial membrane prolipoproteins. Hydrolyzes -Xaa-Yaa-Zaa-|-(S,diacylglyceryl)Cys-, in which Xaa is hydrophobic (preferably Leu), and Yaa (Ala or Ser) and Zaa (Gly or Ala) have small, neutral side chains.. Its pathway is protein modification; lipoprotein biosynthesis (signal peptide cleavage). Its function is as follows. This protein specifically catalyzes the removal of signal peptides from prolipoproteins. In Azoarcus sp. (strain BH72), this protein is Lipoprotein signal peptidase.